The sequence spans 459 residues: UDP-N-acetylmuramate--L-alanine ligase (459 aa).

An ATP-binding site is contributed by 118–124 (GTHGKTT).

The protein belongs to the MurCDEF family.

Its subcellular location is the cytoplasm. The catalysed reaction is UDP-N-acetyl-alpha-D-muramate + L-alanine + ATP = UDP-N-acetyl-alpha-D-muramoyl-L-alanine + ADP + phosphate + H(+). It participates in cell wall biogenesis; peptidoglycan biosynthesis. In terms of biological role, cell wall formation. In Lachnospira eligens (strain ATCC 27750 / DSM 3376 / VPI C15-48 / C15-B4) (Eubacterium eligens), this protein is UDP-N-acetylmuramate--L-alanine ligase.